Here is a 145-residue protein sequence, read N- to C-terminus: Ribonuclease H (145 aa).

The 142-residue stretch at 2–143 (SKKEVIIYTD…ADSLARKAII (142 aa)) folds into the RNase H type-1 domain. Mg(2+)-binding residues include Asp11, Glu49, Asp71, and Asp135.

Belongs to the RNase H family. In terms of assembly, monomer. Requires Mg(2+) as cofactor.

Its subcellular location is the cytoplasm. The catalysed reaction is Endonucleolytic cleavage to 5'-phosphomonoester.. Functionally, endonuclease that specifically degrades the RNA of RNA-DNA hybrids. The sequence is that of Ribonuclease H from Wolbachia pipientis wMel.